The sequence spans 473 residues: Ornithine decarboxylase (473 aa).

Position 106 is an N6-(pyridoxal phosphate)lysine (Lys106). Residues Ser240, Gly277, and 313 to 316 each bind pyridoxal 5'-phosphate; that span reads EPGR. Residue 367-368 coordinates substrate; sequence FD. Cys417 functions as the Proton donor; shared with dimeric partner in the catalytic mechanism. Asp418 is a substrate binding site. Position 447 (Tyr447) interacts with pyridoxal 5'-phosphate.

Belongs to the Orn/Lys/Arg decarboxylase class-II family. As to quaternary structure, homodimer. Only the dimer is catalytically active, as the active sites are constructed of residues from both monomers. The cofactor is pyridoxal 5'-phosphate.

Its subcellular location is the cytoplasm. It carries out the reaction L-ornithine + H(+) = putrescine + CO2. Its pathway is amine and polyamine biosynthesis; putrescine biosynthesis via L-ornithine pathway; putrescine from L-ornithine: step 1/1. Its activity is regulated as follows. Inhibited by antizyme (AZ) OAZ1 in response to polyamine levels. AZ inhibits the assembly of the functional homodimer by binding to ODC monomers and targeting them for ubiquitin-independent proteolytic destruction by the 26S proteasome. In terms of biological role, catalyzes the first and rate-limiting step of polyamine biosynthesis that converts ornithine into putrescine, which is the precursor for the polyamines, spermidine and spermine. Polyamines are essential for cell proliferation and are implicated in cellular processes, ranging from DNA replication to apoptosis. The polypeptide is Ornithine decarboxylase (SPE1) (Candida albicans (strain SC5314 / ATCC MYA-2876) (Yeast)).